We begin with the raw amino-acid sequence, 919 residues long: Glutamate receptor ionotropic, kainate 3 (919 aa).

The signal sequence occupies residues 1–31 (MTAPWRRLRSLVWEYWAGFLVCAFWIPDSRG). Topologically, residues 32-563 (MPHVIRIGGI…VFSFLNPLSP (532 aa)) are extracellular. Residues Asn-70, Asn-76, Asn-278, Asn-381, Asn-415, Asn-426, and Asn-433 are each glycosylated (N-linked (GlcNAc...) asparagine). Cys-99 and Cys-350 form a disulfide bridge. Residues Pro-518, Thr-520, and Arg-525 each coordinate L-glutamate. N-linked (GlcNAc...) asparagine glycosylation is found at Asn-548 and Asn-551. A helical membrane pass occupies residues 564–584 (DIWMYVLLAYLGVSCVLFVIA). At 585–636 (RFSPYEWYDAHPCNPGSEVVENNFTLLNSFWFGMGSLMQQGSELMPKALSTR) the chain is on the cytoplasmic side. The chain crosses the membrane as a helical span at residues 637-657 (IIGGIWWFFTLIIISSYTANL). At 658-820 (AAFLTVERME…KEASALGIQK (163 aa)) the chain is on the extracellular side. The L-glutamate site is built by Ala-691, Thr-692, and Glu-739. A glycan (N-linked (GlcNAc...) asparagine) is linked at Asn-752. The chain crosses the membrane as a helical span at residues 821-841 (IGGIFIVLAAGLVLSVLVAVG). At 842-919 (EFIYKLRKTA…CSTSLAPVFP (78 aa)) the chain is on the cytoplasmic side. Residue Ser-869 is modified to Phosphoserine. Lys-887 is covalently cross-linked (Glycyl lysine isopeptide (Lys-Gly) (interchain with G-Cter in SUMO1)).

The protein belongs to the glutamate-gated ion channel (TC 1.A.10.1) family. GRIK3 subfamily. In terms of assembly, homotetramer, and heterotetramer with GRIK4 or GRIK5. Can form functional heteromeric receptors with GRIK2. Interacts with PRKCABP. Interacts with NETO2. As to quaternary structure, homomeric GluR7A forms functional kainate receptors which have very low sensitivity to glutamate. Can form functional heteromeric receptors with GRIK4 and GRIK5. Homomeric GluR7B forms functional kainate receptors. In terms of processing, mass spectrometry data suggest the protein is N-glycosylated at five distinct sites. Expressed in the olfactory bulb (at protein level). Expressed in the deep cortical layers, dentate gyrus, reticular thalamic nucleus, mammillary bodies, pons, and cerebellum of the adult.

Its subcellular location is the cell membrane. The protein resides in the postsynaptic cell membrane. It carries out the reaction Ca(2+)(in) = Ca(2+)(out). Its function is as follows. Ionotropic glutamate receptor that functions as a cation-permeable ligand-gated ion channel, gated by L-glutamate and the glutamatergic agonist kainic acid. Binding of the excitatory neurotransmitter L-glutamate induces a conformation change, leading to the opening of the cation channel, and thereby converts the chemical signal to an electrical impulse. The receptor then desensitizes rapidly and enters a transient inactive state, characterized by the presence of bound agonist. In association with GRIK2, involved in presynaptic facilitation of glutamate release at hippocampal mossy fiber synapses. Ionotropic glutamate receptor that functions as a ligand-gated cation channel, gated by L-glutamate and the glutamatergic agonist kainic acid. In Rattus norvegicus (Rat), this protein is Glutamate receptor ionotropic, kainate 3 (Grik3).